Reading from the N-terminus, the 212-residue chain is Small ribosomal subunit protein uS3 (212 aa).

Residues 39-108 (IKNYIKERYK…EITISVVEVR (70 aa)) enclose the KH type-2 domain.

It belongs to the universal ribosomal protein uS3 family. In terms of assembly, part of the 30S ribosomal subunit. Forms a tight complex with proteins S10 and S14.

Its function is as follows. Binds the lower part of the 30S subunit head. Binds mRNA in the 70S ribosome, positioning it for translation. This Aquifex aeolicus (strain VF5) protein is Small ribosomal subunit protein uS3.